The sequence spans 139 residues: ATP synthase epsilon chain (139 aa).

Belongs to the ATPase epsilon chain family. F-type ATPases have 2 components, CF(1) - the catalytic core - and CF(0) - the membrane proton channel. CF(1) has five subunits: alpha(3), beta(3), gamma(1), delta(1), epsilon(1). CF(0) has three main subunits: a, b and c.

It localises to the cell inner membrane. Functionally, produces ATP from ADP in the presence of a proton gradient across the membrane. This is ATP synthase epsilon chain from Pseudomonas syringae pv. tomato (strain ATCC BAA-871 / DC3000).